The chain runs to 383 residues: Probable cell wall hydrolase LytN (383 aa).

The N-terminal stretch at 1–49 is a signal peptide; that stretch reads MFIYYCKECSIMNKQQSKVRYSIRKVSIGILSISIGMFLALGMSNKAYA. Residues 175–219 form the LysM domain; the sequence is QIYTVKKGDTLSAIALKYKTTVSNIQNTNNIANPNLIFIGQKLKV. Residues 241–378 form the Peptidase C51 domain; sequence NSSTLNYLKT…NYENDMIFIR (138 aa).

It is found in the secreted. Its function is as follows. Probably involved in peptidoglycan hydrolysis. The chain is Probable cell wall hydrolase LytN (lytN) from Staphylococcus aureus (strain Mu50 / ATCC 700699).